Consider the following 193-residue polypeptide: ATP-dependent Clp protease proteolytic subunit 1 (193 aa).

Ser98 functions as the Nucleophile in the catalytic mechanism. His123 is a catalytic residue.

This sequence belongs to the peptidase S14 family. Fourteen ClpP subunits assemble into 2 heptameric rings which stack back to back to give a disk-like structure with a central cavity, resembling the structure of eukaryotic proteasomes.

It is found in the cytoplasm. It carries out the reaction Hydrolysis of proteins to small peptides in the presence of ATP and magnesium. alpha-casein is the usual test substrate. In the absence of ATP, only oligopeptides shorter than five residues are hydrolyzed (such as succinyl-Leu-Tyr-|-NHMec, and Leu-Tyr-Leu-|-Tyr-Trp, in which cleavage of the -Tyr-|-Leu- and -Tyr-|-Trp bonds also occurs).. Functionally, cleaves peptides in various proteins in a process that requires ATP hydrolysis. Has a chymotrypsin-like activity. Plays a major role in the degradation of misfolded proteins. This Bacillus cereus (strain ZK / E33L) protein is ATP-dependent Clp protease proteolytic subunit 1.